The following is a 152-amino-acid chain: UPF0225 protein YchJ (152 aa).

Belongs to the UPF0225 family.

This Shigella flexneri serotype 5b (strain 8401) protein is UPF0225 protein YchJ.